The chain runs to 366 residues: Peroxisomal (S)-2-hydroxy-acid oxidase GLO4 (366 aa).

The FMN hydroxy acid dehydrogenase domain occupies 1–360; it reads MEDNLPVNVR…TRSHVMTEGD (360 aa). Tyr-27 serves as a coordination point for a 2-oxocarboxylate. FMN contacts are provided by residues 80 to 82, Ser-109, 130 to 132, and Thr-158; these read PTG and QLY. Tyr-132 provides a ligand contact to a 2-oxocarboxylate. Position 167 (Arg-167) interacts with a 2-oxocarboxylate. The FMN site is built by Lys-231 and Ser-253. His-255 (proton acceptor) is an active-site residue. Arg-258 provides a ligand contact to a 2-oxocarboxylate. FMN-binding positions include 286 to 290 and 309 to 310; these read DGGIR and XX. The Microbody targeting signal signature appears at 364–366; it reads SLL.

This sequence belongs to the FMN-dependent alpha-hydroxy acid dehydrogenase family. Homotetramer. The cofactor is FMN.

The protein localises to the peroxisome. The catalysed reaction is a (2S)-2-hydroxycarboxylate + O2 = a 2-oxocarboxylate + H2O2. It participates in lipid metabolism; fatty acid metabolism. In terms of biological role, oxidase that catalyzes the oxidation of a broad range of 2-hydroxyacids to the corresponding 2-oxoacids, with a reduction of O2 to H2O2. May be involved in a general medium- and long-chain fatty acid catabolic pathway such as alpha-oxidation. The chain is Peroxisomal (S)-2-hydroxy-acid oxidase GLO4 (GLO4) from Oryza sativa subsp. indica (Rice).